A 503-amino-acid polypeptide reads, in one-letter code: MRRPKISLKKYFYLTLICALLLIFGFSLKEREIWKTLSPRSSQITTQQQQHQHLHQLQSMDEEHPMATSSTPPPIAATLLPEVADNLVEEPEQTVLEEEESEADRLQEPPAEKAWFFKNGEYYPKPAKTYSNRKARKRHAPRLLPHQDPYSDRIINQLMYVPHNYEEIKSSGKLKTILLYNGLGPWNVKKGRDVFLKAKCPVDTCELTANRDLASTADMILYKDHYIPTGIRRPSNSKQVSMLYYLECPYHTQNVKVPDAINWTATYRRDSTIVAPYEKWQYYDTKVQQQEQDINYSVNKTKKVAWFVSNCGARNGRLQYAHELQKYIEVDIYGACGNFKCSRSTADKCFEILDNDYKFYLAFENSNCKDYITEKFFVNALNRRVLPIVMGARPEDYEVSAPRRSYIHVDEFSSPKELAEYLRILDHDDELYNSYFKWKGTGEFINTYYWCRVCATLHNEEQLRKPRWYTDLNDWWRGPGVCTTRSWRNFKARKDVISDSSDD.

Residues 1-10 lie on the Cytoplasmic side of the membrane; it reads MRRPKISLKK. A helical; Signal-anchor for type II membrane protein membrane pass occupies residues 11 to 28; that stretch reads YFYLTLICALLLIFGFSL. At 29-503 the chain is on the lumenal side; sequence KEREIWKTLS…KDVISDSSDD (475 aa). The segment at 44-71 is disordered; sequence ITTQQQQHQHLHQLQSMDEEHPMATSST. The segment covering 47 to 58 has biased composition (low complexity); it reads QQQQHQHLHQLQ. N-linked (GlcNAc...) asparagine glycans are attached at residues Asn262, Asn295, and Asn299.

Belongs to the glycosyltransferase 10 family. Requires Mn(2+) as cofactor.

The protein resides in the golgi apparatus. It is found in the golgi stack membrane. The catalysed reaction is N(4)-{beta-D-GlcNAc-(1-&gt;2)-alpha-D-Man-(1-&gt;3)-[beta-D-GlcNAc-(1-&gt;2)-alpha-D-Man-(1-&gt;6)]-beta-D-Man-(1-&gt;4)-beta-D-GlcNAc-(1-&gt;4)-beta-D-GlcNAc}-L-asparaginyl-[protein] + GDP-beta-L-fucose = N(4)-{beta-D-GlcNAc-(1-&gt;2)-alpha-D-Man-(1-&gt;3)-[beta-D-GlcNAc-(1-&gt;2)-alpha-D-Man-(1-&gt;6)]-beta-D-Man-(1-&gt;4)-beta-D-GlcNAc-(1-&gt;4)-[alpha-L-Fuc(1-&gt;3)]-beta-D-GlcNAc}-L-asparaginyl-[protein] + GDP + H(+). It participates in protein modification; protein glycosylation. Functionally, catalyzes alpha-1,3 glycosidic linkages of N-glycans. Plays a role in neuronal development by promoting ventral nerve cord formation, possibly by promoting interactions between migrating cells and the extracellular matrix or by promoting neural activity. The polypeptide is Glycoprotein 3-alpha-L-fucosyltransferase A (FucTA) (Drosophila melanogaster (Fruit fly)).